The primary structure comprises 84 residues: Beta-toxin Ct16 (84 aa).

Positions 1–19 are cleaved as a signal peptide; sequence MNYFILLFVATFLLLDVNC. An LCN-type CS-alpha/beta domain is found at 21-80; the sequence is KDGYPVDANNCKFECWKNEYCDELCKAKRAESGYCYKLKLSCWCEGLPDDEPTKTSDRCY. 4 disulfide bridges follow: Cys-31–Cys-79, Cys-35–Cys-55, Cys-41–Cys-62, and Cys-45–Cys-64. Thr-82 bears the Threonine amide mark.

This sequence belongs to the long (4 C-C) scorpion toxin superfamily. Sodium channel inhibitor family. Alpha subfamily. As to expression, expressed by the venom gland.

The protein localises to the secreted. Alpha toxins bind voltage-independently at site-3 of sodium channels (Nav) and inhibit the inactivation of the activated channels, thereby blocking neuronal transmission. Is possibly toxic to mice. The chain is Beta-toxin Ct16 from Centruroides tecomanus (Scorpion).